A 282-amino-acid polypeptide reads, in one-letter code: tRNA pseudouridine synthase B (282 aa).

Aspartate 39 acts as the Nucleophile in catalysis.

Belongs to the pseudouridine synthase TruB family. Type 1 subfamily.

The enzyme catalyses uridine(55) in tRNA = pseudouridine(55) in tRNA. Its function is as follows. Responsible for synthesis of pseudouridine from uracil-55 in the psi GC loop of transfer RNAs. This is tRNA pseudouridine synthase B from Borreliella burgdorferi (strain ATCC 35210 / DSM 4680 / CIP 102532 / B31) (Borrelia burgdorferi).